Consider the following 552-residue polypeptide: CTP synthase (552 aa).

The amidoligase domain stretch occupies residues 1–267 (MSKFVFVTGG…AHQTLELLRM (267 aa)). Ser-13 is a CTP binding site. Ser-13 is a UTP binding site. ATP-binding positions include 14-19 (SIGKGI) and Asp-71. Residues Asp-71 and Glu-141 each coordinate Mg(2+). Residues 148 to 150 (DIE), 188 to 193 (KTKPTQ), and Lys-224 contribute to the CTP site. UTP is bound by residues 188–193 (KTKPTQ) and Lys-224. The Glutamine amidotransferase type-1 domain occupies 292–534 (TVALVGKYVQ…INAVLKRRNA (243 aa)). Gly-354 lines the L-glutamine pocket. Cys-381 (nucleophile; for glutamine hydrolysis) is an active-site residue. L-glutamine-binding positions include 382–385 (LGMQ), Glu-405, and Arg-462. Active-site residues include His-507 and Glu-509.

This sequence belongs to the CTP synthase family. As to quaternary structure, homotetramer.

The enzyme catalyses UTP + L-glutamine + ATP + H2O = CTP + L-glutamate + ADP + phosphate + 2 H(+). The catalysed reaction is L-glutamine + H2O = L-glutamate + NH4(+). It catalyses the reaction UTP + NH4(+) + ATP = CTP + ADP + phosphate + 2 H(+). The protein operates within pyrimidine metabolism; CTP biosynthesis via de novo pathway; CTP from UDP: step 2/2. Allosterically activated by GTP, when glutamine is the substrate; GTP has no effect on the reaction when ammonia is the substrate. The allosteric effector GTP functions by stabilizing the protein conformation that binds the tetrahedral intermediate(s) formed during glutamine hydrolysis. Inhibited by the product CTP, via allosteric rather than competitive inhibition. Catalyzes the ATP-dependent amination of UTP to CTP with either L-glutamine or ammonia as the source of nitrogen. Regulates intracellular CTP levels through interactions with the four ribonucleotide triphosphates. This Synechocystis sp. (strain ATCC 27184 / PCC 6803 / Kazusa) protein is CTP synthase.